The following is a 254-amino-acid chain: 3-deoxy-manno-octulosonate cytidylyltransferase (254 aa).

This sequence belongs to the KdsB family.

The protein resides in the cytoplasm. The catalysed reaction is 3-deoxy-alpha-D-manno-oct-2-ulosonate + CTP = CMP-3-deoxy-beta-D-manno-octulosonate + diphosphate. Its pathway is nucleotide-sugar biosynthesis; CMP-3-deoxy-D-manno-octulosonate biosynthesis; CMP-3-deoxy-D-manno-octulosonate from 3-deoxy-D-manno-octulosonate and CTP: step 1/1. It participates in bacterial outer membrane biogenesis; lipopolysaccharide biosynthesis. Functionally, activates KDO (a required 8-carbon sugar) for incorporation into bacterial lipopolysaccharide in Gram-negative bacteria. The chain is 3-deoxy-manno-octulosonate cytidylyltransferase from Pseudomonas fluorescens (strain ATCC BAA-477 / NRRL B-23932 / Pf-5).